Here is an 819-residue protein sequence, read N- to C-terminus: Eukaryotic translation initiation factor 3 subunit C (819 aa).

Positions 1-106 are disordered; that stretch reads MSRFFLKTYE…DSSDEEDGKK (106 aa). Composition is skewed to acidic residues over residues 17 to 41 and 47 to 59; these read GEEE…ELSD and DSDE…EDND. The 176-residue stretch at 620-795 folds into the PCI domain; that stretch reads FHQHINLDLI…EYIIFERGEE (176 aa).

This sequence belongs to the eIF-3 subunit C family. As to quaternary structure, component of the eukaryotic translation initiation factor 3 (eIF-3) complex.

Its subcellular location is the cytoplasm. Its function is as follows. Component of the eukaryotic translation initiation factor 3 (eIF-3) complex, which is involved in protein synthesis of a specialized repertoire of mRNAs and, together with other initiation factors, stimulates binding of mRNA and methionyl-tRNAi to the 40S ribosome. The eIF-3 complex specifically targets and initiates translation of a subset of mRNAs involved in cell proliferation. In Kluyveromyces lactis (strain ATCC 8585 / CBS 2359 / DSM 70799 / NBRC 1267 / NRRL Y-1140 / WM37) (Yeast), this protein is Eukaryotic translation initiation factor 3 subunit C.